A 179-amino-acid polypeptide reads, in one-letter code: Peptide deformylase (179 aa).

Cysteine 102 and histidine 144 together coordinate Fe cation. Residue glutamate 145 is part of the active site. Residue histidine 148 participates in Fe cation binding.

This sequence belongs to the polypeptide deformylase family. Fe(2+) is required as a cofactor.

It catalyses the reaction N-terminal N-formyl-L-methionyl-[peptide] + H2O = N-terminal L-methionyl-[peptide] + formate. Functionally, removes the formyl group from the N-terminal Met of newly synthesized proteins. Requires at least a dipeptide for an efficient rate of reaction. N-terminal L-methionine is a prerequisite for activity but the enzyme has broad specificity at other positions. The chain is Peptide deformylase from Wolbachia sp. subsp. Brugia malayi (strain TRS).